A 328-amino-acid chain; its full sequence is YDG domain-containing protein At5g47150 (328 aa).

In terms of domain architecture, YDG spans 176-320 (GSVPGINIGD…KSVYKFKLCR (145 aa)).

The protein resides in the nucleus. The sequence is that of YDG domain-containing protein At5g47150 from Arabidopsis thaliana (Mouse-ear cress).